Consider the following 547-residue polypeptide: Methionine--tRNA ligase (547 aa).

The 'HIGH' region signature appears at 13-23 (PYANGPLHIGH). 4 residues coordinate Zn(2+): Cys145, Cys148, Cys158, and Cys161. A 'KMSKS' region motif is present at residues 334 to 338 (QFSKS). ATP is bound at residue Lys337.

The protein belongs to the class-I aminoacyl-tRNA synthetase family. MetG type 1 subfamily. Zn(2+) is required as a cofactor.

The protein localises to the cytoplasm. It catalyses the reaction tRNA(Met) + L-methionine + ATP = L-methionyl-tRNA(Met) + AMP + diphosphate. Functionally, is required not only for elongation of protein synthesis but also for the initiation of all mRNA translation through initiator tRNA(fMet) aminoacylation. The protein is Methionine--tRNA ligase of Thermoplasma acidophilum (strain ATCC 25905 / DSM 1728 / JCM 9062 / NBRC 15155 / AMRC-C165).